The primary structure comprises 316 residues: GTP cyclohydrolase FolE2 2 (316 aa).

It belongs to the GTP cyclohydrolase IV family.

The catalysed reaction is GTP + H2O = 7,8-dihydroneopterin 3'-triphosphate + formate + H(+). It participates in cofactor biosynthesis; 7,8-dihydroneopterin triphosphate biosynthesis; 7,8-dihydroneopterin triphosphate from GTP: step 1/1. Its function is as follows. Converts GTP to 7,8-dihydroneopterin triphosphate. This Burkholderia orbicola (strain MC0-3) protein is GTP cyclohydrolase FolE2 2.